A 484-amino-acid polypeptide reads, in one-letter code: Malonate-semialdehyde dehydrogenase 1 (484 aa).

Residues phenylalanine 154, lysine 178, glutamate 181, arginine 182, and serine 231 each coordinate NAD(+). Cysteine 286 serves as the catalytic Nucleophile. Residue glutamate 384 participates in NAD(+) binding.

The protein belongs to the aldehyde dehydrogenase family. IolA subfamily. Homotetramer.

It catalyses the reaction 3-oxopropanoate + NAD(+) + CoA + H2O = hydrogencarbonate + acetyl-CoA + NADH + H(+). The enzyme catalyses 2-methyl-3-oxopropanoate + NAD(+) + CoA + H2O = propanoyl-CoA + hydrogencarbonate + NADH + H(+). It functions in the pathway polyol metabolism; myo-inositol degradation into acetyl-CoA; acetyl-CoA from myo-inositol: step 7/7. Catalyzes the oxidation of malonate semialdehyde (MSA) and methylmalonate semialdehyde (MMSA) into acetyl-CoA and propanoyl-CoA, respectively. Is involved in a myo-inositol catabolic pathway. Bicarbonate, and not CO2, is the end-product of the enzymatic reaction. This is Malonate-semialdehyde dehydrogenase 1 from Bacillus licheniformis (strain ATCC 14580 / DSM 13 / JCM 2505 / CCUG 7422 / NBRC 12200 / NCIMB 9375 / NCTC 10341 / NRRL NRS-1264 / Gibson 46).